The sequence spans 84 residues: Small ribosomal subunit protein uS17c (84 aa).

Belongs to the universal ribosomal protein uS17 family. In terms of assembly, part of the 30S ribosomal subunit.

Its subcellular location is the plastid. It localises to the chloroplast. Functionally, one of the primary rRNA binding proteins, it binds specifically to the 5'-end of 16S ribosomal RNA. This chain is Small ribosomal subunit protein uS17c (rps17), found in Trieres chinensis (Marine centric diatom).